The following is a 408-amino-acid chain: Succinylornithine transaminase (408 aa).

An N6-(pyridoxal phosphate)lysine modification is found at Lys-252.

This sequence belongs to the class-III pyridoxal-phosphate-dependent aminotransferase family. AstC subfamily. Requires pyridoxal 5'-phosphate as cofactor.

It catalyses the reaction N(2)-succinyl-L-ornithine + 2-oxoglutarate = N-succinyl-L-glutamate 5-semialdehyde + L-glutamate. Its pathway is amino-acid degradation; L-arginine degradation via AST pathway; L-glutamate and succinate from L-arginine: step 3/5. Functionally, catalyzes the transamination of N(2)-succinylornithine and alpha-ketoglutarate into N(2)-succinylglutamate semialdehyde and glutamate. Can also act as an acetylornithine aminotransferase. The sequence is that of Succinylornithine transaminase from Salmonella newport (strain SL254).